A 576-amino-acid chain; its full sequence is Type II restriction enzyme BsuRI (576 aa).

In terms of assembly, monomer. Mg(2+) serves as cofactor.

It catalyses the reaction Endonucleolytic cleavage of DNA to give specific double-stranded fragments with terminal 5'-phosphates.. A P subtype restriction enzyme that recognizes the double-stranded sequence 5'-GGCC-3' and cleaves after G-2. The protein is Type II restriction enzyme BsuRI (hsdRR) of Bacillus subtilis.